The chain runs to 301 residues: Transmembrane protein 178A (301 aa).

A signal peptide spans 1-25 (MEKRALVTAISLSMSLLALMLLVTA). Residues 26–183 (IFTDHWYETD…LLHLRRITAG (158 aa)) are Extracellular-facing. Residue Asn162 is glycosylated (N-linked (GlcNAc...) asparagine). A helical membrane pass occupies residues 184–204 (FLGMAAAVMLCGSIVAAVGFF). The Cytoplasmic portion of the chain corresponds to 205–215 (WEESLTQHVSG). The helical transmembrane segment at 216–236 (LLFLMAGIFCTISLCTYAASV) threads the bilayer. The Extracellular segment spans residues 237–258 (SYDLSRNPPFIYGLPSDVDHGY). Residues 259–279 (GWSIFCAWVSLGLTVASGCIC) form a helical membrane-spanning segment. The Cytoplasmic portion of the chain corresponds to 280–301 (TTYPFLSRTKALRSKTARESSV).

The protein belongs to the TMEM178 family.

Its subcellular location is the endoplasmic reticulum membrane. May act as a negative regulator of osteoclast differentiation. The chain is Transmembrane protein 178A (tmem178a) from Danio rerio (Zebrafish).